The chain runs to 381 residues: Transaldolase 1 (381 aa).

The active-site Schiff-base intermediate with substrate is K149.

This sequence belongs to the transaldolase family. Type 2 subfamily.

Its subcellular location is the cytoplasm. It carries out the reaction D-sedoheptulose 7-phosphate + D-glyceraldehyde 3-phosphate = D-erythrose 4-phosphate + beta-D-fructose 6-phosphate. It participates in carbohydrate degradation; pentose phosphate pathway; D-glyceraldehyde 3-phosphate and beta-D-fructose 6-phosphate from D-ribose 5-phosphate and D-xylulose 5-phosphate (non-oxidative stage): step 2/3. In terms of biological role, transaldolase is important for the balance of metabolites in the pentose-phosphate pathway. In Streptomyces coelicolor (strain ATCC BAA-471 / A3(2) / M145), this protein is Transaldolase 1 (tal1).